A 314-amino-acid chain; its full sequence is Mitochondrial MRF1 N(5)-glutamine methyltransferase MTQ1 (314 aa).

S-adenosyl-L-methionine-binding positions include 118-122 (FTGTG), Asp-141, and Asn-188. 188-191 (NPPY) contributes to the substrate binding site.

The protein belongs to the protein N5-glutamine methyltransferase family.

The protein resides in the mitochondrion. The enzyme catalyses L-glutaminyl-[peptide chain release factor] + S-adenosyl-L-methionine = N(5)-methyl-L-glutaminyl-[peptide chain release factor] + S-adenosyl-L-homocysteine + H(+). Methylates MRF1 on 'Gln-287' using S-adenosyl L-methionine as methyl donor. This Saccharomyces cerevisiae (strain ATCC 204508 / S288c) (Baker's yeast) protein is Mitochondrial MRF1 N(5)-glutamine methyltransferase MTQ1 (MTQ1).